We begin with the raw amino-acid sequence, 491 residues long: Putative diacyglycerol O-acyltransferase MT2557 (491 aa).

Catalysis depends on His-145, which acts as the Proton acceptor.

The protein belongs to the long-chain O-acyltransferase family.

The enzyme catalyses an acyl-CoA + a 1,2-diacyl-sn-glycerol = a triacyl-sn-glycerol + CoA. The protein operates within glycerolipid metabolism; triacylglycerol biosynthesis. In Mycobacterium tuberculosis (strain CDC 1551 / Oshkosh), this protein is Putative diacyglycerol O-acyltransferase MT2557.